The primary structure comprises 392 residues: Pannexin-3 (392 aa).

Over 1–39 (MSLAHTAAEYMLSDALLPDRRGSRLKGLRLELPLDKMVK) the chain is Cytoplasmic. Residues 40–60 (FVTVGFPLLLMSLAFAQEFSS) form a helical membrane-spanning segment. Topologically, residues 61-113 (GSPISCFSPSNFSVRQAVFVDSSCWDSLAHYKQDEAGQYTVKSLWPHKALPYS) are extracellular. Residue asparagine 71 is glycosylated (N-linked (GlcNAc...) asparagine). The helical transmembrane segment at 114-134 (LLALAVAMYLPVLLWQYAAVP) threads the bilayer. At 135–215 (ALSSDLLFII…VATYLLRNAL (81 aa)) the chain is on the cytoplasmic side. A helical membrane pass occupies residues 216-236 (LLLFTSATYLYLGHFHLDVFF). Over 237–267 (QEEFSCSIKTGLLHEETHVPELITCRLTSLS) the chain is Extracellular. Residues 268–288 (VFQIVSVSSVAIYTVLVPVII) form a helical membrane-spanning segment. Residues 289-392 (YNLTRLCRWD…LTQHTYDEHP (104 aa)) lie on the Cytoplasmic side of the membrane.

It belongs to the pannexin family. As to quaternary structure, homoheptameric. As to expression, skin.

The protein resides in the cell membrane. Its subcellular location is the cell junction. It localises to the gap junction. The protein localises to the endoplasmic reticulum membrane. It catalyses the reaction Ca(2+)(in) = Ca(2+)(out). The enzyme catalyses ATP(in) = ATP(out). Functionally, regulator of osteoblast differentiation by functionning as a Ca(2+) channel in the endoplasmic reticulum which regulates calmodulin (CaM) pathways. Allows ATP release into the extracellular space and activation or purinergic receptors. In Rattus norvegicus (Rat), this protein is Pannexin-3 (Panx3).